Here is a 77-residue protein sequence, read N- to C-terminus: Small ribosomal subunit protein bS20 (77 aa).

The disordered stretch occupies residues 47–77 (ASSSIDKAESKGLIHKNKASRDKARLAAKLG).

Belongs to the bacterial ribosomal protein bS20 family.

Binds directly to 16S ribosomal RNA. This Streptococcus pyogenes serotype M1 protein is Small ribosomal subunit protein bS20.